Reading from the N-terminus, the 185-residue chain is Probable chorismate pyruvate-lyase (185 aa).

Positions 80, 118, and 170 each coordinate substrate.

Belongs to the UbiC family.

Its subcellular location is the cytoplasm. It carries out the reaction chorismate = 4-hydroxybenzoate + pyruvate. Its pathway is cofactor biosynthesis; ubiquinone biosynthesis. Functionally, removes the pyruvyl group from chorismate, with concomitant aromatization of the ring, to provide 4-hydroxybenzoate (4HB) for the ubiquinone pathway. The polypeptide is Probable chorismate pyruvate-lyase (Pseudomonas putida (strain ATCC 47054 / DSM 6125 / CFBP 8728 / NCIMB 11950 / KT2440)).